Here is a 139-residue protein sequence, read N- to C-terminus: Endoribonuclease YbeY (139 aa).

Residues histidine 99, histidine 103, and histidine 109 each coordinate Zn(2+).

Belongs to the endoribonuclease YbeY family. Zn(2+) is required as a cofactor.

Its subcellular location is the cytoplasm. Single strand-specific metallo-endoribonuclease involved in late-stage 70S ribosome quality control and in maturation of the 3' terminus of the 16S rRNA. The protein is Endoribonuclease YbeY of Nautilia profundicola (strain ATCC BAA-1463 / DSM 18972 / AmH).